The sequence spans 279 residues: Thymidylate synthase 1 (279 aa).

Residue 141–142 (RR) coordinates dUMP. The active-site Nucleophile is the Cys-161. DUMP contacts are provided by residues 181-184 (RSND), Asn-192, and 222-224 (HVY). Residue Asp-184 participates in (6R)-5,10-methylene-5,6,7,8-tetrahydrofolate binding. Ala-278 serves as a coordination point for (6R)-5,10-methylene-5,6,7,8-tetrahydrofolate.

Belongs to the thymidylate synthase family. Bacterial-type ThyA subfamily. In terms of assembly, homodimer.

It localises to the cytoplasm. It carries out the reaction dUMP + (6R)-5,10-methylene-5,6,7,8-tetrahydrofolate = 7,8-dihydrofolate + dTMP. It participates in pyrimidine metabolism; dTTP biosynthesis. Functionally, catalyzes the reductive methylation of 2'-deoxyuridine-5'-monophosphate (dUMP) to 2'-deoxythymidine-5'-monophosphate (dTMP) while utilizing 5,10-methylenetetrahydrofolate (mTHF) as the methyl donor and reductant in the reaction, yielding dihydrofolate (DHF) as a by-product. This enzymatic reaction provides an intracellular de novo source of dTMP, an essential precursor for DNA biosynthesis. The sequence is that of Thymidylate synthase 1 from Bacillus spizizenii (strain ATCC 23059 / NRRL B-14472 / W23) (Bacillus subtilis subsp. spizizenii).